The following is a 237-amino-acid chain: MSSAELGKLHIYASPEQWEKWSPRWKSIVFRTQYESIFKNPKHHGEKKPFHCLFKLAGTMKSISLSHLDIPEHRMSNAVAFPITTSTTPMQLDVTLQFRGHKIPLVVGEASVSLEDIFTHGTVESVIPLFMKKRHPEAYLRIKLVYTRSKRKSARKHKVPSSFHRFSGRRGLGIHYNHSGSQSSLITLPLPQKQPDFLRMNNDTNELKTNGFEPIRFVFTTTPYSPASFEVPKTLKT.

This is an uncharacterized protein from Schizosaccharomyces pombe (strain 972 / ATCC 24843) (Fission yeast).